The chain runs to 444 residues: Orexin receptor type 2 (444 aa).

A compositionally biased stretch (basic and acidic residues) spans 1–10; that stretch reads MSGTKLEDSP. Residues 1-30 are disordered; sequence MSGTKLEDSPPCRNWSSAPELNETQEPFLN. The Extracellular segment spans residues 1 to 54; it reads MSGTKLEDSPPCRNWSSAPELNETQEPFLNPTDYDDEEFLRYLWREYLHPKEYE. 2 N-linked (GlcNAc...) asparagine glycosylation sites follow: Asn14 and Asn22. Residues 14–27 are compositionally biased toward polar residues; sequence NWSSAPELNETQEP. Positions 33 to 49 are required for response to orexin-A; that stretch reads DYDDEEFLRYLWREYLH. The helical transmembrane segment at 55–75 threads the bilayer; the sequence is WVLIAGYIIVFVVALVGNVLV. Topologically, residues 76–88 are cytoplasmic; the sequence is CVAVWKNHHMRTV. The chain crosses the membrane as a helical span at residues 89 to 110; it reads TNYFIVNLSLADVLVTITCLPA. The Extracellular segment spans residues 111 to 127; that stretch reads TLVVDITETWFFGQSLC. Cys127 and Cys210 are joined by a disulfide. A helical membrane pass occupies residues 128 to 150; that stretch reads KVIPYLQTVSVSVSVLTLSCIAL. Topologically, residues 151-170 are cytoplasmic; sequence DRWYAICHPLMFKSTAKRAR. The chain crosses the membrane as a helical span at residues 171–191; the sequence is NSIVIIWIVSCIIMIPQAIVM. Topologically, residues 192–222 are extracellular; the sequence is ECSTMLPGLANKTTLFTVCDERWGGEIYPKM. Asn202 carries an N-linked (GlcNAc...) asparagine glycan. Residues 223–243 traverse the membrane as a helical segment; the sequence is YHICFFLVTYMAPLCLMVLAY. Topologically, residues 244–304 are cytoplasmic; the sequence is LQIFRKLWCR…QIRARRKTAR (61 aa). Residues 305 to 326 traverse the membrane as a helical segment; it reads MLMVVLLVFAICYLPISILNVL. Residues 327 to 342 are Extracellular-facing; the sequence is KRVFGMFTHTEDRETV. Residues 343–366 traverse the membrane as a helical segment; sequence YAWFTFSHWLVYANSAANPIIYNF. Residues 367–444 lie on the Cytoplasmic side of the membrane; the sequence is LSGKFREEFK…ANGAGPLQNW (78 aa).

This sequence belongs to the G-protein coupled receptor 1 family.

Its subcellular location is the cell membrane. Its function is as follows. Nonselective, high-affinity receptor for both orexin-A and orexin-B neuropeptides. Triggers an increase in cytoplasmic Ca(2+) levels in response to orexin-A binding. The chain is Orexin receptor type 2 (HCRTR2) from Canis lupus familiaris (Dog).